The following is a 215-amino-acid chain: UPF0502 protein YceH (215 aa).

N6-acetyllysine is present on K80.

It belongs to the UPF0502 family.

The polypeptide is UPF0502 protein YceH (Escherichia coli O7:K1 (strain IAI39 / ExPEC)).